We begin with the raw amino-acid sequence, 878 residues long: MKIVNVESTFNIHNLHFFLYETFILIPRQTPIQFGLQFFKFGGKRDYDEACEDWDPSIGVDQTNGNSNFNNEFSNNGIDSSNGNFNQFNTNTNNNNNNNNNNINSNLNNGLNINSNNNNNNNNNNNLINNSNNNNNNNNNSLSTSLSNNSVPLTISSNNQNSLVPSNNNNNSTNNNNNNNNNNNNSTTNNTSTTTTTGSTSTSITTTTTSGTSKKGERKRTKFPEEEVKVLCDLVILFGKDVRTILTFKPFSGGKYSERQIYDKVRALKRTGLVPTNPTSDDIKKSRFDLGIADNVDIQSLKSTKKGRLSNYVSNSSQSSDSDYSSSDHEDDDYIPNSTLSSSSTLPIPSNPNSNKRLIISRNPNQLSSTNVNNNINNSGGSSNNNNNSNSINNNNNNNINNINNNNNNINNNNSNNNNNNNNNINNNNNSNNSNSIHNNNNNSNNNNNNNNNNNNNNNNNNNNNNNIINSNSNNNNNNSNGNITPTTPVTSSRRSIQILQENANHLISQIQNQMSTTPPITPTSHHNAIPIQSLSNEIINTPSRTRERDRIEKEKEKLEKERLEKLEQKEKERLEKLEKKNQQKLLEQQKEQQQKEQQQQQKQQKNNRHHLDLTDDEDEDDDENSLKSDNSNNEKDVNLSNNSSNKGSGKLNLTGNSVFDYYSTGHNLSLYKSIKTSPSSMVTIPSPSSSCSSTSSIIGSSSSSGGGGGSSGVIGISSKYNYSFNPFTTTSITSLLPTTVNSNSNSSGNGSSNNSTPIVNVISTSNSNSNSNSFFKYETDNNLFIYYPFFNQNTNSNNYTFERDLLTLTVEVPSIFDWIKDKQPQNIDKKIKIEFPHPGKNYGPPRKVNKLPEGINGVGFIFEKIKQGSVDFDISIL.

Disordered regions lie at residues 58 to 223 (IGVD…RTKF), 306 to 494 (KGRL…TSSR), 585 to 652 (KLLE…SGKL), and 679 to 709 (PSSMVTIPSPSSSCSSTSSIIGSSSSSGGGG). Low complexity-rich tracts occupy residues 64–213 (NGNS…SGTS), 314–325 (SNSSQSSDSDYS), and 335–355 (IPNSTLSSSSTLPIPSNPNSN). Polar residues predominate over residues 362–372 (RNPNQLSSTNV). A compositionally biased stretch (low complexity) spans 373–494 (NNNINNSGGS…TPTTPVTSSR (122 aa)). Residues 585–595 (KLLEQQKEQQQ) show a composition bias toward basic and acidic residues. A compositionally biased stretch (low complexity) spans 596-605 (KEQQQQQKQQ). Residues 615 to 624 (TDDEDEDDDE) are compositionally biased toward acidic residues. Low complexity-rich tracts occupy residues 639-652 (NLSNNSSNKGSGKL) and 679-704 (PSSMVTIPSPSSSCSSTSSIIGSSSS).

This is an uncharacterized protein from Dictyostelium discoideum (Social amoeba).